The sequence spans 335 residues: uncharacterized protein (335 aa).

The tract at residues 201–236 (GPMAKNKARRKEDNYDTHNCDDANQDKKEEAEGKNT) is disordered. Positions 210–235 (RKEDNYDTHNCDDANQDKKEEAEGKN) are enriched in basic and acidic residues.

Its function is as follows. Dispensable for normal development and fertility. This is an uncharacterized protein from Homo sapiens (Human).